A 323-amino-acid polypeptide reads, in one-letter code: Probable inactive poly [ADP-ribose] polymerase SRO2 (323 aa).

The PARP catalytic domain occupies 31–257; the sequence is SSVSHAGSSF…FASRPSSPWV (227 aa). The region spanning 250–321 is the RST domain; it reads SRPSSPWVSF…IKNHKNRNKV (72 aa).

As to quaternary structure, interacts with STO.

Its subcellular location is the nucleus. Functionally, probable inactive ADP-ribosyltransferase that may be involved in stress and developmental responses. The sequence is that of Probable inactive poly [ADP-ribose] polymerase SRO2 (SRO2) from Arabidopsis thaliana (Mouse-ear cress).